The primary structure comprises 179 residues: Inner membrane-spanning protein YciB (179 aa).

The next 5 membrane-spanning stretches (helical) occupy residues 22-42 (IYAA…YSWV), 50-70 (MALI…FFHN), 76-96 (WKVT…QWVM), 121-141 (LAWA…AFWL), and 149-169 (FKVF…GIYI).

The protein belongs to the YciB family.

The protein resides in the cell inner membrane. In terms of biological role, plays a role in cell envelope biogenesis, maintenance of cell envelope integrity and membrane homeostasis. This is Inner membrane-spanning protein YciB from Shigella dysenteriae serotype 1 (strain Sd197).